A 481-amino-acid chain; its full sequence is UDP-glycosyltransferase 85C2 (481 aa).

H23 functions as the Proton acceptor in the catalytic mechanism. H23 serves as a coordination point for an anthocyanidin. The active-site Charge relay is D120. Residues T143, Q362, H377, W380, S382, E385, D401, and Q402 each coordinate UDP-alpha-D-glucose.

It belongs to the UDP-glycosyltransferase family.

It carries out the reaction steviol + UDP-alpha-D-glucose = steviolmonoside + UDP + H(+). The catalysed reaction is steviolmonoside + UDP-alpha-D-glucose = rubusoside + UDP. Its function is as follows. Involved in the biosynthesis of steviol glycosides in leaves. Converts steviol to the mono-glycoside steviolmonoside. Converts the mono-glycoside steviolmonoside to the bi-glycoside rubusoside. The chain is UDP-glycosyltransferase 85C2 from Stevia rebaudiana (Stevia).